A 71-amino-acid polypeptide reads, in one-letter code: Small ribosomal subunit protein bS21 (71 aa).

It belongs to the bacterial ribosomal protein bS21 family.

The chain is Small ribosomal subunit protein bS21 from Buchnera aphidicola subsp. Baizongia pistaciae (strain Bp).